Consider the following 124-residue polypeptide: Ragulator complex protein LAMTOR2 homolog (124 aa).

It belongs to the GAMAD family. Part of the Ragulator complex.

In terms of biological role, regulator of the TOR pathway, a signaling cascade that promotes cell growth in response to growth factors, energy levels, and amino acids. May activate the TOR signaling cascade in response to amino acids. The protein is Ragulator complex protein LAMTOR2 homolog of Caenorhabditis elegans.